The following is a 58-amino-acid chain: Parvalbumin beta 3 (58 aa).

A1 carries the post-translational modification N-acetylalanine. One can recognise an EF-hand domain in the interval 24-58; that stretch reads FNYKTFFKFFAIIDQDHSGFIEEEELKALSDAETK. Residues D37, D39, S41, F43, E45, and E48 each coordinate Ca(2+).

The protein belongs to the parvalbumin family.

Its function is as follows. In muscle, parvalbumin is thought to be involved in relaxation after contraction. It binds two calcium ions. The chain is Parvalbumin beta 3 from Merluccius senegalensis (Senegalese hake).